Reading from the N-terminus, the 184-residue chain is Ribosome-recycling factor (184 aa).

The protein belongs to the RRF family.

The protein resides in the cytoplasm. In terms of biological role, responsible for the release of ribosomes from messenger RNA at the termination of protein biosynthesis. May increase the efficiency of translation by recycling ribosomes from one round of translation to another. The sequence is that of Ribosome-recycling factor from Staphylococcus carnosus (strain TM300).